Consider the following 301-residue polypeptide: Probable alpha-L-glutamate ligase (301 aa).

Residues 104 to 287 (LQLLSRRGIG…VAGIIIEHLE (184 aa)) form the ATP-grasp domain. ATP contacts are provided by residues Lys141, 178–179 (EY), Asp187, and 211–213 (RSN). 3 residues coordinate Mg(2+): Asp248, Glu260, and Asn262. The Mn(2+) site is built by Asp248, Glu260, and Asn262.

It belongs to the RimK family. Mg(2+) serves as cofactor. Mn(2+) is required as a cofactor.

This chain is Probable alpha-L-glutamate ligase, found in Pseudomonas fluorescens (strain SBW25).